A 591-amino-acid chain; its full sequence is Tricyclene synthase, chloroplastic (591 aa).

The transit peptide at 1–45 (MATLLQIGSGVIYSNALRKTLRRPQSSTCIIVTETTPCNKSPTVQ) directs the protein to the chloroplast. 5 residues coordinate (2E)-geranyl diphosphate: Arg-302, Asp-339, Asp-343, Arg-481, and Asn-484. Mg(2+)-binding residues include Asp-339 and Asp-343. The DDXXD motif motif lies at 339–343 (DDIYD). Residues Asn-484, Thr-488, and Glu-492 each coordinate Mg(2+).

The protein belongs to the terpene synthase family. Tpsb subfamily. The cofactor is Mg(2+). It depends on Mn(2+) as a cofactor. As to expression, predominantly expressed in flowers but also in leaves, siliques and in stems.

The protein resides in the plastid. Its subcellular location is the chloroplast stroma. The catalysed reaction is (2E)-geranyl diphosphate = beta-myrcene + diphosphate. The enzyme catalyses (2E)-geranyl diphosphate = tricyclene + diphosphate. It catalyses the reaction (2E)-geranyl diphosphate = (E)-beta-ocimene + diphosphate. It participates in secondary metabolite biosynthesis; terpenoid biosynthesis. Its function is as follows. Involved in monoterpene (C10) biosynthesis. The major product is beta-myrcene (56%) followed by (E)-beta-ocimene (20%) and minor amounts (less than 5%) of the cyclic monoterpene (-)-limonene, (+)-limonene, 2-carene and tricyclene. The chain is Tricyclene synthase, chloroplastic from Arabidopsis thaliana (Mouse-ear cress).